Consider the following 620-residue polypeptide: Glutathione-regulated potassium-efflux system protein KefC (620 aa).

Helical transmembrane passes span 4-24 (HTLI…PIAV), 26-46 (LGLG…PWGL), 54-74 (SILH…GLEL), 90-110 (GALQ…LLGL), 114-134 (VAEL…MQAM), 149-169 (FAVL…IPLL), 178-198 (MGAF…VVLL), 218-238 (VFSA…EEVG), 270-290 (GLLL…GTLL), 294-314 (LRIV…LWLI), 327-347 (WFAV…GAAQ), and 359-379 (SLTL…VILN). Residues 399–518 (QPRVIIAGFG…AGVEKPERET (120 aa)) form the RCK N-terminal domain. Positions 597–620 (GWQGTEEGKHTGNMADEPETKPSS) are disordered.

It belongs to the monovalent cation:proton antiporter 2 (CPA2) transporter (TC 2.A.37) family. KefC subfamily. In terms of assembly, homodimer. Interacts with the regulatory subunit KefF.

The protein localises to the cell inner membrane. Pore-forming subunit of a potassium efflux system that confers protection against electrophiles. Catalyzes K(+)/H(+) antiport. The polypeptide is Glutathione-regulated potassium-efflux system protein KefC (Escherichia coli O8 (strain IAI1)).